A 412-amino-acid chain; its full sequence is 2,3-bisphosphoglycerate-independent phosphoglycerate mutase (412 aa).

This sequence belongs to the BPG-independent phosphoglycerate mutase family. A-PGAM subfamily.

The enzyme catalyses (2R)-2-phosphoglycerate = (2R)-3-phosphoglycerate. It functions in the pathway carbohydrate degradation; glycolysis; pyruvate from D-glyceraldehyde 3-phosphate: step 3/5. Catalyzes the interconversion of 2-phosphoglycerate and 3-phosphoglycerate. The chain is 2,3-bisphosphoglycerate-independent phosphoglycerate mutase (apgM) from Pyrococcus horikoshii (strain ATCC 700860 / DSM 12428 / JCM 9974 / NBRC 100139 / OT-3).